The following is a 183-amino-acid chain: Peptide deformylase (183 aa).

2 residues coordinate Fe cation: cysteine 90 and histidine 132. Glutamate 133 is an active-site residue. Histidine 136 provides a ligand contact to Fe cation.

This sequence belongs to the polypeptide deformylase family. Fe(2+) is required as a cofactor.

The catalysed reaction is N-terminal N-formyl-L-methionyl-[peptide] + H2O = N-terminal L-methionyl-[peptide] + formate. In terms of biological role, removes the formyl group from the N-terminal Met of newly synthesized proteins. Requires at least a dipeptide for an efficient rate of reaction. N-terminal L-methionine is a prerequisite for activity but the enzyme has broad specificity at other positions. This Parafrankia sp. (strain EAN1pec) protein is Peptide deformylase.